Reading from the N-terminus, the 265-residue chain is uncharacterized protein (265 aa).

Residues 1–20 form the signal peptide; that stretch reads MSRAMALFFVLCWIQDEIVL. The helical transmembrane segment at 192–212 threads the bilayer; it reads IIAAVSGVAILMAIVLLLLGL.

It localises to the membrane. This is an uncharacterized protein from Homo sapiens (Human).